A 332-amino-acid polypeptide reads, in one-letter code: DNA-directed RNA polymerase subunit alpha (332 aa).

Residues 1 to 244 are alpha N-terminal domain (alpha-NTD); it reads MKKHAKVYYS…AHLNLLADVE (244 aa). Positions 259 to 332 are alpha C-terminal domain (alpha-CTD); the sequence is IKEEPIRRFS…NYKNENKGEN (74 aa).

This sequence belongs to the RNA polymerase alpha chain family. As to quaternary structure, homodimer. The RNAP catalytic core consists of 2 alpha, 1 beta, 1 beta' and 1 omega subunit. When a sigma factor is associated with the core the holoenzyme is formed, which can initiate transcription.

It carries out the reaction RNA(n) + a ribonucleoside 5'-triphosphate = RNA(n+1) + diphosphate. DNA-dependent RNA polymerase catalyzes the transcription of DNA into RNA using the four ribonucleoside triphosphates as substrates. The chain is DNA-directed RNA polymerase subunit alpha from Mesomycoplasma hyopneumoniae (strain 7448) (Mycoplasma hyopneumoniae).